The sequence spans 627 residues: MTIADHQARILPLFKKLTSLSPDPLPEAERDPRLKGVGFLPRGTLFSCFHEEHLAEAETLAEALVEAKNFDDFIALATNARAVVNEGLYAFAMSVAILSRDDCNGVVLPPIQEVFPDRFVPAETINRALKVDKVSDPNKDTVVPIQKTGNIRDPEYNVAYFREDIGINSHHWHWHLVYPAFYDADIFGKIKDRKGELFYYMHQQMCARYDCERLSVGLQRMIPFQNLDDELEGYSPHLRSLVSGLSYGSRPAGMHLRDINDCSVQDMERWRERILDAIHTGLVTDSHGKEIKLTEENGLNILGALIESSHDSVNKPFYGTLHNWGHVMIARIHDADGRYRTNPGVMDDTSTSLRDPIFYRYHRWMDNIFQEYKHRLPSYTHQQLDFPGVRISRVTVRSKVPNLIHTYSKDSLLELSHGINLKGHIQVKYEHLDHEPYNYEIEVDNRTGEARETCVRIFLAPKYDELGNRLILEEQRRLYIELDKFHRRLEPGKNVLVRASGDSSVTLSKVPTFEELESGNANVNPNEYCSCGWPEHMLVPRGKERGMDFYLFVMLTDYEEDKVQGAGEQTICSDAVSYCGAKDQKYPDKKAMGYPFDRPIQVRTPSQFKTPNMAFQEIIIQYEGHKH.

Positions 171, 175, 202, 322, 326, and 362 each coordinate Cu cation. Residue Asn-445 is glycosylated (N-linked (GlcNAc...) asparagine). Residues Cys-531 and Cys-579 are joined by a disulfide bond.

Belongs to the tyrosinase family. Hemocyanin subfamily. As to quaternary structure, tarantula hemocyanin is a 24-chain polymer with seven different chains identified. Hemolymph.

Its subcellular location is the secreted. The protein localises to the extracellular space. In terms of biological role, hemocyanins are copper-containing oxygen carriers occurring freely dissolved in the hemolymph of many mollusks and arthropods. This is Hemocyanin D chain (HCD) from Aphonopelma sp. (American tarantula).